Reading from the N-terminus, the 94-residue chain is Large ribosomal subunit protein eL42 (94 aa).

The Zn(2+) site is built by C11, C14, C71, and C74. The C4-type zinc finger occupies 11-74; the sequence is CPYCKRHTIH…LDLRFVCTVC (64 aa).

It belongs to the eukaryotic ribosomal protein eL42 family. In terms of assembly, part of the 50S ribosomal subunit. Requires Zn(2+) as cofactor.

Binds to the 23S rRNA. The protein is Large ribosomal subunit protein eL42 of Pyrococcus horikoshii (strain ATCC 700860 / DSM 12428 / JCM 9974 / NBRC 100139 / OT-3).